Here is a 378-residue protein sequence, read N- to C-terminus: Chaperone protein DnaJ (378 aa).

One can recognise a J domain in the interval 5-69 (EYYDRLGVSK…QKRAAYDQYG (65 aa)). The CR-type zinc finger occupies 134–216 (GVEKEVSYNR…CHGTGHEKQA (83 aa)). Cys-147, Cys-150, Cys-164, Cys-167, Cys-190, Cys-193, Cys-204, and Cys-207 together coordinate Zn(2+). 4 CXXCXGXG motif repeats span residues 147–154 (CGTCLGSG), 164–171 (CRKCHGSG), 190–197 (CDICHGSG), and 204–211 (CQTCHGTG).

It belongs to the DnaJ family. Homodimer. It depends on Zn(2+) as a cofactor.

Its subcellular location is the cytoplasm. Functionally, participates actively in the response to hyperosmotic and heat shock by preventing the aggregation of stress-denatured proteins and by disaggregating proteins, also in an autonomous, DnaK-independent fashion. Unfolded proteins bind initially to DnaJ; upon interaction with the DnaJ-bound protein, DnaK hydrolyzes its bound ATP, resulting in the formation of a stable complex. GrpE releases ADP from DnaK; ATP binding to DnaK triggers the release of the substrate protein, thus completing the reaction cycle. Several rounds of ATP-dependent interactions between DnaJ, DnaK and GrpE are required for fully efficient folding. Also involved, together with DnaK and GrpE, in the DNA replication of plasmids through activation of initiation proteins. This Streptococcus pyogenes protein is Chaperone protein DnaJ.